Here is a 381-residue protein sequence, read N- to C-terminus: Spermidine/putrescine import ATP-binding protein PotA (381 aa).

The 231-residue stretch at Val19–Ile249 folds into the ABC transporter domain. Position 51 to 58 (Gly51 to Thr58) interacts with ATP.

This sequence belongs to the ABC transporter superfamily. Spermidine/putrescine importer (TC 3.A.1.11.1) family. As to quaternary structure, the complex is composed of two ATP-binding proteins (PotA), two transmembrane proteins (PotB and PotC) and a solute-binding protein (PotD).

Its subcellular location is the cell inner membrane. It carries out the reaction ATP + H2O + polyamine-[polyamine-binding protein]Side 1 = ADP + phosphate + polyamineSide 2 + [polyamine-binding protein]Side 1.. Part of the ABC transporter complex PotABCD involved in spermidine/putrescine import. Responsible for energy coupling to the transport system. This is Spermidine/putrescine import ATP-binding protein PotA from Trichodesmium erythraeum (strain IMS101).